The chain runs to 404 residues: Probable tRNA sulfurtransferase (404 aa).

The THUMP domain maps to 61–166 (EAVSERLKDV…SGYSYIMCDE (106 aa)). ATP-binding positions include 184 to 185 (LL), 209 to 210 (HF), Arg266, Gly288, and Gln297.

This sequence belongs to the ThiI family.

It is found in the cytoplasm. The catalysed reaction is [ThiI sulfur-carrier protein]-S-sulfanyl-L-cysteine + a uridine in tRNA + 2 reduced [2Fe-2S]-[ferredoxin] + ATP + H(+) = [ThiI sulfur-carrier protein]-L-cysteine + a 4-thiouridine in tRNA + 2 oxidized [2Fe-2S]-[ferredoxin] + AMP + diphosphate. The enzyme catalyses [ThiS sulfur-carrier protein]-C-terminal Gly-Gly-AMP + S-sulfanyl-L-cysteinyl-[cysteine desulfurase] + AH2 = [ThiS sulfur-carrier protein]-C-terminal-Gly-aminoethanethioate + L-cysteinyl-[cysteine desulfurase] + A + AMP + 2 H(+). The protein operates within cofactor biosynthesis; thiamine diphosphate biosynthesis. In terms of biological role, catalyzes the ATP-dependent transfer of a sulfur to tRNA to produce 4-thiouridine in position 8 of tRNAs, which functions as a near-UV photosensor. Also catalyzes the transfer of sulfur to the sulfur carrier protein ThiS, forming ThiS-thiocarboxylate. This is a step in the synthesis of thiazole, in the thiamine biosynthesis pathway. The sulfur is donated as persulfide by IscS. The protein is Probable tRNA sulfurtransferase of Bacillus cereus (strain ATCC 10987 / NRS 248).